A 469-amino-acid chain; its full sequence is Probable periplasmic serine endoprotease DegP-like (469 aa).

Positions 1–25 (MNRLLKQVCMVVVSSFMMASMLTHA) are cleaved as a signal peptide. Active-site charge relay system residues include His114, Asp144, and Ser217. Substrate-binding positions include 215–217 (GNS) and 272–276 (LGVLI). 2 consecutive PDZ domains span residues 261-352 (LKSD…YRDG) and 358-458 (SVTL…IRQG).

The protein belongs to the peptidase S1C family.

The protein localises to the periplasm. The enzyme catalyses Acts on substrates that are at least partially unfolded. The cleavage site P1 residue is normally between a pair of hydrophobic residues, such as Val-|-Val.. Its function is as follows. Might be efficient in the degradation of transiently denatured and unfolded proteins which accumulate in the periplasm following stress conditions. The polypeptide is Probable periplasmic serine endoprotease DegP-like (Marinomonas sp. (strain MWYL1)).